We begin with the raw amino-acid sequence, 323 residues long: NADH-ubiquinone oxidoreductase chain 1 (323 aa).

8 consecutive transmembrane segments (helical) span residues Leu-8–Ile-28, Met-75–Pro-95, Leu-105–Gly-125, Leu-151–Met-171, Met-177–Glu-197, Ala-234–Met-254, Glu-258–Val-278, and Phe-298–Gly-318.

Belongs to the complex I subunit 1 family. Core subunit of respiratory chain NADH dehydrogenase (Complex I) which is composed of 45 different subunits.

It is found in the mitochondrion inner membrane. It carries out the reaction a ubiquinone + NADH + 5 H(+)(in) = a ubiquinol + NAD(+) + 4 H(+)(out). Its function is as follows. Core subunit of the mitochondrial membrane respiratory chain NADH dehydrogenase (Complex I) which catalyzes electron transfer from NADH through the respiratory chain, using ubiquinone as an electron acceptor. Essential for the catalytic activity and assembly of complex I. The sequence is that of NADH-ubiquinone oxidoreductase chain 1 (mt-nd1) from Xenopus laevis (African clawed frog).